The sequence spans 666 residues: MDRPALPKSIKDKTNPWGPIILGILIMLGGALGKGSPHKVFNLTWEVYNQEYETVWATSGSHPLWTWWPTLTPDLCMLAQLAKPSWGLSDYPPYSKPPGPPCCTTDNNPPGCSRDCNGPLTYLTPRCSTAWNRLKLVLTTHHLNQGFYVCPGPHRPRHARNCGGPDDFYCAHWGCETTGQAYWKPSSSWDYIRVSNNASSSDATTACKNNNWCSPLAISFTDPGKRATSWTSGFTWGLRLYISGHPGLIFGVRLKISDLGPRVPIGPNPVLSEQRPPSQPEPARLPPSSNLTQGGTPSAPTGPPQEGTGDRLLDLVQGAYQALNATSPDKTQECWLCLVSSPPYYEGVAVVGPYSNHTTAPANCSADSQHKLTLSEVTGKPLPRKGSQDPPGPVQYHSGARQKYSLSGGSRGTMWACNTGLTPCLSTAVLNLTTDYCVLVELWPRVTYHSLDFVYRQVEGRTRYQREPVSLTLALLLGGLTMGGIAAGVGTGTSALVKTQQFEQLHAAIQADLKEVESSITNLEKSLTSLSEVVLQNRRGLDLLFLEKGGLCAALKEECCFYADHTGLVRDSMAKLRERLNQRQKLFEAGQGWFEGLFNRSPWLTTLISTIMGPLIILLLILMFGPCILNRLVQFVKDRISVVQALVLTQQYHQLKPLEHGRAIVK.

A signal peptide spans 1–33 (MDRPALPKSIKDKTNPWGPIILGILIMLGGALG). Positions 31-264 (ALGKGSPHKV…KISDLGPRVP (234 aa)) are receptor-binding domain (RBD). At 34–607 (KGSPHKVFNL…FNRSPWLTTL (574 aa)) the chain is on the extracellular side. An N-linked (GlcNAc...) asparagine; by host glycan is attached at N42. 5 disulfide bridges follow: C76–C127, C102–C116, C103–C112, C150–C170, and C162–C175. Residue D115 participates in Zn(2+) binding. A glycan (N-linked (GlcNAc...) asparagine; by host) is linked at N197. An intrachain disulfide couples C207 to C213. The segment at 265–310 (IGPNPVLSEQRPPSQPEPARLPPSSNLTQGGTPSAPTGPPQEGTGD) is disordered. The segment covering 287–299 (PSSNLTQGGTPSA) has biased composition (polar residues). Residues N290 and N324 are each glycosylated (N-linked (GlcNAc...) asparagine; by host). Disulfide bonds link C334–C337, C334–C560, C364–C417, C424–C437, and C552–C560. A CXXC motif is present at residues 334-337 (CWLC). N-linked (GlcNAc...) asparagine; by host glycosylation is found at N356 and N363. The disordered stretch occupies residues 378 to 399 (TGKPLPRKGSQDPPGPVQYHSG). N431 carries N-linked (GlcNAc...) asparagine; by host glycosylation. Residues 469 to 489 (VSLTLALLLGGLTMGGIAAGV) form a fusion peptide region. Residues 500-534 (QQFEQLHAAIQADLKEVESSITNLEKSLTSLSEVV) adopt a coiled-coil conformation. Residues 535–551 (LQNRRGLDLLFLEKGGL) are immunosuppression. Positions 552–560 (CAALKEECC) match the CX6CC motif. The helical transmembrane segment at 608-628 (ISTIMGPLIILLLILMFGPCI) threads the bilayer. C627 carries the S-palmitoyl cysteine; by host lipid modification. Over 629-666 (LNRLVQFVKDRISVVQALVLTQQYHQLKPLEHGRAIVK) the chain is Cytoplasmic. Positions 652–655 (YHQL) match the YXXL motif; contains endocytosis signal motif.

As to quaternary structure, the mature envelope protein (Env) consists of a trimer of SU-TM heterodimers attached by a labile interchain disulfide bond. Post-translationally, specific enzymatic cleavages in vivo yield mature proteins. Envelope glycoproteins are synthesized as an inactive precursor that is N-glycosylated and processed likely by host cell furin or by a furin-like protease in the Golgi to yield the mature SU and TM proteins. The cleavage site between SU and TM requires the minimal sequence [KR]-X-[KR]-R. The R-peptide is released from the C-terminus of the cytoplasmic tail of the TM protein upon particle formation as a result of proteolytic cleavage by the viral protease. Cleavage of this peptide is required for TM to become fusogenic. The CXXC motif is highly conserved across a broad range of retroviral envelope proteins. It is thought to participate in the formation of a labile disulfide bond possibly with the CX6CC motif present in the transmembrane protein. Isomerization of the intersubunit disulfide bond to an SU intrachain disulfide bond is thought to occur upon receptor recognition in order to allow membrane fusion. In terms of processing, the transmembrane protein is palmitoylated. Post-translationally, the R-peptide is palmitoylated.

The protein resides in the virion membrane. It is found in the host cell membrane. Functionally, the surface protein (SU) attaches the virus to the host cell by binding to its receptor. This interaction triggers the refolding of the transmembrane protein (TM) and is thought to activate its fusogenic potential by unmasking its fusion peptide. Fusion occurs at the host cell plasma membrane. In terms of biological role, the transmembrane protein (TM) acts as a class I viral fusion protein. Under the current model, the protein has at least 3 conformational states: pre-fusion native state, pre-hairpin intermediate state, and post-fusion hairpin state. During viral and target cell membrane fusion, the coiled coil regions (heptad repeats) assume a trimer-of-hairpins structure, positioning the fusion peptide in close proximity to the C-terminal region of the ectodomain. The formation of this structure appears to drive apposition and subsequent fusion of viral and target cell membranes. Membranes fusion leads to delivery of the nucleocapsid into the cytoplasm. In Hortulanus murine leukemia virus (HoMuLV), this protein is Envelope glycoprotein (env).